Consider the following 516-residue polypeptide: Coiled-coil domain-containing protein 82 (516 aa).

Basic residues predominate over residues 1 to 13 (MVHARRHETRKNS). The disordered stretch occupies residues 1-265 (MVHARRHETR…DYGDAENEDD (265 aa)). Acidic residues predominate over residues 38–62 (DSDEELDSDEEIGSDEDLDGGESID). Basic and acidic residues predominate over residues 78-96 (IPEKETELNLIKVESERSN). The segment covering 98 to 107 (KCHMNTSSSS) has biased composition (polar residues). Basic and acidic residues predominate over residues 113–135 (MNKTKHNDLPDDEAHPGQAEGHH). Residues serine 170 and serine 194 each carry the phosphoserine modification. Threonine 202 bears the Phosphothreonine mark. A coiled-coil region spans residues 204 to 232 (EKSPAARKREYHQKLQELCERSRQKQRHN). Basic and acidic residues predominate over residues 215-226 (HQKLQELCERSR). Residues 248–265 (TDEDEDDDDYGDAENEDD) show a composition bias toward acidic residues. Serine 301 is subject to Phosphoserine.

In Rattus norvegicus (Rat), this protein is Coiled-coil domain-containing protein 82 (Ccdc82).